A 375-amino-acid chain; its full sequence is Geranylgeranyl transferase type-1 subunit beta (375 aa).

Residues Met-1–Ala-33 are disordered. Ser-2 carries the post-translational modification N-acetylserine. PFTB repeat units lie at residues Ser-157–Asp-199, Lys-206–Gly-247, Pro-265–Gly-306, and Lys-313–Glu-354. Residues His-232–Gly-234 and Arg-285–Lys-288 each bind geranylgeranyl diphosphate. 2 residues coordinate Zn(2+): Asp-291 and Cys-293. Position 294 to 297 (Tyr-294 to Trp-297) interacts with geranylgeranyl diphosphate. His-342 is a binding site for Zn(2+).

The protein belongs to the protein prenyltransferase subunit beta family. In terms of assembly, heterodimer of an alpha and a beta subunit. Zn(2+) serves as cofactor. Requires Mg(2+) as cofactor. Expressed in roots, leaves, stems, flowers and siliques.

The enzyme catalyses geranylgeranyl diphosphate + L-cysteinyl-[protein] = S-geranylgeranyl-L-cysteinyl-[protein] + diphosphate. In terms of biological role, catalyzes the transfer of a geranyl-geranyl moiety from geranyl-geranyl pyrophosphate to a cysteine at the fourth position from the C-terminus of proteins having the C-terminal sequence Cys-aliphatic-aliphatic-X (CaaX). Seems to exclusively prenylate CaaX substrates with leucine in the terminal position. The beta subunit is responsible for peptide-binding. May negatively regulate abscisic acid (ABA) signaling in guard cells and auxin-induced lateral root initiation. Functionally, negatively regulates ABA signaling in guard cells. in negative regulation of auxin-induced lateral root initiation. This is Geranylgeranyl transferase type-1 subunit beta (GGB) from Arabidopsis thaliana (Mouse-ear cress).